We begin with the raw amino-acid sequence, 354 residues long: 3'-5' exonuclease (354 aa).

Residues 1 to 120 (MERFLTKMPI…PSPEKEKPEK (120 aa)) form a disordered region. Basic and acidic residues-rich tracts occupy residues 13–30 (KANEVPKKEAVAKKETPK) and 37–50 (KKDTPKELKDKENA). Residues 59–70 (TKGRPGRPAAKR) show a composition bias toward basic residues. Over residues 71–91 (KNLDTPDVKDEKIAMEEENPP) the composition is skewed to basic and acidic residues. Serine 104, serine 110, and serine 112 each carry phosphoserine. The 166-residue stretch at 149–314 (WVEKQKDDVV…GQVIYRELER (166 aa)) folds into the 3'-5' exonuclease domain. Mg(2+) contacts are provided by aspartate 163, glutamate 165, and aspartate 301.

Belongs to the WRNexo family.

It is found in the nucleus. Functionally, has exonuclease activity on both single-stranded and duplex templates bearing overhangs, but not blunt ended duplex DNA, and cleaves in a 3'-5' direction. Essential for the formation of DNA replication focal centers. Has an important role in maintaining genome stability. This chain is 3'-5' exonuclease, found in Drosophila simulans (Fruit fly).